The chain runs to 281 residues: Glyceraldehyde dehydrogenase medium chain (281 aa).

Residues 1–176 enclose the FAD-binding PCMH-type domain; the sequence is MYPPEFSYVR…TQIEVPVLDG (176 aa). FAD is bound by residues 31–35 and 110–114; these read AGGQS and TIGGA.

Heterotrimer composed of a large chain (CutA), a medium chain (CutB) and a small chain (CutC). The cofactor is FAD.

The protein resides in the cytoplasm. The enzyme catalyses D-glyceraldehyde + A + H2O = (R)-glycerate + AH2 + H(+). In terms of biological role, component of the glyceraldehyde dehydrogenase which is involved the nonphosphorylated Entner-Doudoroff pathway. Catalyzes the oxidation of D-glyceraldehyde to yield glycerate. When the artificial electron acceptor 2,6-dichlorophenol-indophenol (Cl2Ind) is used, the enzyme shows a broad substrate range (glyceraldehyde-3-phosphate, formaldehyde, acetaldehyde, propionaldehyde and isobutyraldehyde), but is most active with D-glyceraldehyde. It is not known which acceptor is utilized in vivo. The sequence is that of Glyceraldehyde dehydrogenase medium chain (cutB) from Sulfolobus acidocaldarius (strain ATCC 33909 / DSM 639 / JCM 8929 / NBRC 15157 / NCIMB 11770).